Consider the following 233-residue polypeptide: Gamma-interferon-responsive lysosomal thiol protein (233 aa).

Residues 1 to 26 (MVSSSLTKLVFFGCLLLLTFTDNLVA) form the signal peptide. A disulfide bond links C42 and C45. N-linked (GlcNAc...) asparagine glycosylation is found at N80 and N207. The propeptide at 200–233 (TTLPKVCNSSASMSKSPERKWKLQVSYANKATNY) is removed in mature form.

The protein belongs to the GILT family. In terms of assembly, dimer; disulfide-linked. Expressed in the outer integument of seed coat.

It is found in the secreted. The protein localises to the lysosome. Functionally, lysosomal thiol reductase that can reduce protein disulfide bonds. May facilitate the complete unfolding of proteins destined for lysosomal degradation. The sequence is that of Gamma-interferon-responsive lysosomal thiol protein from Arabidopsis thaliana (Mouse-ear cress).